The following is a 460-amino-acid chain: Ecdysteroid UDP-glucosyltransferase (460 aa).

Residues 1–18 (MFISILLLALAVERILCA) form the signal peptide.

The protein belongs to the UDP-glycosyltransferase family.

Its function is as follows. Catalyzes the transfer of glucose from UDP-glucose to ecdysteroids which are insect molting hormones. Expression of egt interferes with normal insect development and block molting. This Lacanobia oleracea granulosis virus (LoGV) protein is Ecdysteroid UDP-glucosyltransferase (EGT).